The chain runs to 326 residues: MAEVLLFEALRDALDEEMQRDPSVLVMGEDVGHYGGSYKVTKGFHEKYGDLRLLDTPIAENSFTGMAIGAAMTGLRPIVEGMNMGFLLLAFNQIANNAGMLHYTSGGNFKIPIVIRGPGGVGRQLGAEHSQRLESYFQSVPGLQMVACSTPYNGKGLLKSAIRNDNPVIFFEHVLLYNLNENLIEQEYLLCLEKAEVVRPGNDITILTYSRMRHHVLQAAKVLVNKGYDPEIIDILSLKPLDMGTISLSVRKTHKVLIVEECMRTGGIGASLRAAILEDLFDYLDAPIQCLSSQDVPTPYSGPLEELTVIQPNQIIQAVEEMCKIE.

Glu60 lines the thiamine diphosphate pocket. The K(+) site is built by Ile113, Ala161, Ile162, and Asn166.

In terms of assembly, heterodimer of an alpha and a beta chain. Requires thiamine diphosphate as cofactor.

It is found in the plastid. The protein localises to the chloroplast. The catalysed reaction is N(6)-[(R)-lipoyl]-L-lysyl-[protein] + pyruvate + H(+) = N(6)-[(R)-S(8)-acetyldihydrolipoyl]-L-lysyl-[protein] + CO2. In terms of biological role, the pyruvate dehydrogenase complex catalyzes the overall conversion of pyruvate to acetyl-CoA and CO(2). It contains multiple copies of three enzymatic components: pyruvate dehydrogenase (E1), dihydrolipoamide acetyltransferase (E2) and lipoamide dehydrogenase (E3). This Chaetosphaeridium globosum (Charophycean green alga) protein is Pyruvate dehydrogenase E1 component subunit beta (pdhB).